A 752-amino-acid chain; its full sequence is MTISPPEREEKKARVIVDNDPVPTSFELWAKPGHFDRTLARGPKTTTWIWNLHALAHDFDTHTSDLEDISRKIFAAHFGHLAVVTLWLSGMIFHGARFSNYEAWLSDPLHVKPSAQVVWPIVGQDILNGDVGGGFHGIQITSGLFQIWRGWGITNSFQLYVTAIGGLVLAGLFLFAGWFHYHKRAPKLEWFQNVESMLNHHLAVLLGCGSLGWAGHLIHVSAPTNKLLDAGVSVKDIPLPHEFILNKGLLTELYPGFASGITPFFTLNWGQYADFLTFKGGLNPVTGGLWLTDISHHHLAIAVLFIIAGHMYRTNWGIGHSIKEILENHKGPFTGEGHKGLYENMTTSWHAQLATNLAFLGSLTIIVAHHMYAMPPYPYLATDYATQLCIFTHHMWIGGFLIVGGAAHATIFMVRDYDPVVNQNNVLDRVIRHRDAIISHLNWVCIFLGFHSFGLYVHNDTMRALGRPQDMFSDTAIQLQPVFAQWVQNIHTLAPGSTAPNALEPASYAFGGGIVAVGGKVAMMPIALGTADFLVHHIHAFTIHVTVLILLKGFLFARNSRLIPDKANLGFRFPCDGPGRGGTCQVSGWDHVFLGLFWMYNSISIVIFHFSWKMQSDVWGTVDAAGNVTHITGGNWAQSALTINGWLRDFLWAQSVQVINSYGSALSAYGLMFLGAHFIWAFSLMFLFSGRGYWQELIESIVWAHNKLKVAPAIQPRALSIIQGRAVGVAHYLLGGIATTWAFFHAHILSLG.

8 consecutive transmembrane segments (helical) span residues 73-96, 159-182, 198-222, 294-312, 349-372, 388-414, 436-458, and 533-551; these read IFAA…FHGA, LYVT…FHYH, LNHH…HVSA, ISHH…GHMY, WHAQ…HHMY, LCIF…IFMV, AIIS…LYVH, and FLVH…LILL. Cysteine 575 and cysteine 584 together coordinate [4Fe-4S] cluster. 2 helical membrane-spanning segments follow: residues 591 to 612 and 666 to 688; these read HVFL…HFSW and LSAY…MFLF. Residue histidine 677 participates in chlorophyll a' binding. Chlorophyll a-binding residues include methionine 685 and tyrosine 693. Tryptophan 694 is a phylloquinone binding site. A helical membrane pass occupies residues 726–746; that stretch reads AVGVAHYLLGGIATTWAFFHA.

This sequence belongs to the PsaA/PsaB family. The PsaA/B heterodimer binds the P700 chlorophyll special pair and subsequent electron acceptors. PSI consists of a core antenna complex that captures photons, and an electron transfer chain that converts photonic excitation into a charge separation. The cyanobacterial PSI reaction center is composed of one copy each of PsaA,B,C,D,E,F,I,J,K,L,M and X, and forms trimeric complexes. Requires PSI electron transfer chain: 5 chlorophyll a, 1 chlorophyll a', 2 phylloquinones and 3 4Fe-4S clusters. PSI core antenna: 90 chlorophyll a, 22 carotenoids, 3 phospholipids and 1 galactolipid. P700 is a chlorophyll a/chlorophyll a' dimer, A0 is one or more chlorophyll a, A1 is one or both phylloquinones and FX is a shared 4Fe-4S iron-sulfur center. as cofactor.

It is found in the cellular thylakoid membrane. The catalysed reaction is reduced [plastocyanin] + hnu + oxidized [2Fe-2S]-[ferredoxin] = oxidized [plastocyanin] + reduced [2Fe-2S]-[ferredoxin]. Functionally, psaA and PsaB bind P700, the primary electron donor of photosystem I (PSI), as well as the electron acceptors A0, A1 and FX. PSI is a plastocyanin/cytochrome c6-ferredoxin oxidoreductase, converting photonic excitation into a charge separation, which transfers an electron from the donor P700 chlorophyll pair to the spectroscopically characterized acceptors A0, A1, FX, FA and FB in turn. Oxidized P700 is reduced on the lumenal side of the thylakoid membrane by plastocyanin or cytochrome c6. This chain is Photosystem I P700 chlorophyll a apoprotein A1, found in Mastigocladus laminosus (Fischerella sp.).